The chain runs to 177 residues: Cyclic pyranopterin monophosphate synthase 3 (177 aa).

Substrate contacts are provided by residues 79–81 (LCH) and 116–117 (ME). D131 is a catalytic residue. The segment at 150 to 177 (KSGGRSGHYRRHDADVKPSDGGSTEDGC) is disordered.

The protein belongs to the MoaC family. In terms of assembly, homohexamer; trimer of dimers.

It catalyses the reaction (8S)-3',8-cyclo-7,8-dihydroguanosine 5'-triphosphate = cyclic pyranopterin phosphate + diphosphate. It participates in cofactor biosynthesis; molybdopterin biosynthesis. Catalyzes the conversion of (8S)-3',8-cyclo-7,8-dihydroguanosine 5'-triphosphate to cyclic pyranopterin monophosphate (cPMP). In Mycobacterium bovis (strain ATCC BAA-935 / AF2122/97), this protein is Cyclic pyranopterin monophosphate synthase 3 (moaC3).